Here is an 84-residue protein sequence, read N- to C-terminus: Conotoxin Tx8.1 (84 aa).

An N-terminal signal peptide occupies residues 1–19 (LKMGAMFVLLLLFTLASSH). Positions 20–44 (REGDIQARKTHLKSDFYRTLPRFAR) are excised as a propeptide.

This sequence belongs to the conotoxin S superfamily. Post-translationally, contains 5 disulfide bonds. Expressed by the venom duct.

It localises to the secreted. In Conus textile (Cloth-of-gold cone), this protein is Conotoxin Tx8.1.